The following is a 745-amino-acid chain: Copper-exporting P-type ATPase B (745 aa).

Residues 1–76 (MNNGIDPENE…GMDHSHMDHE (76 aa)) are disordered. The Cytoplasmic segment spans residues 1–108 (MNNGIDPENE…HMGNFKQKFW (108 aa)). Positions 36–76 (LQEHGKMENMDQHHTHGHMERHQQMDHGHMSGMDHSHMDHE) are enriched in basic and acidic residues. Repeat copies occupy residues 60–71 (MDHGHMSGMDHS), 73–84 (MDHEDMSGMNHS), and 86–97 (MGHENMSGMDHS). Residues 60-97 (MDHGHMSGMDHSHMDHEDMSGMNHSHMGHENMSGMDHS) form a 3 X 12 AA approximate repeats region. The chain crosses the membrane as a helical span at residues 109-128 (LSLILAIPIILFSPMMGMSF). Topologically, residues 129–139 (PFQVTFPGSNW) are extracellular. Residues 140–160 (VVLVLATILFIYGGQPFLSGA) form a helical membrane-spanning segment. At 161–170 (KMELKQKSPA) the chain is on the cytoplasmic side. The helical transmembrane segment at 171–191 (MMTLIAMGITVAYVYSVYSFI) threads the bilayer. At 192 to 200 (ANLINPHTH) the chain is on the extracellular side. The helical transmembrane segment at 201-217 (VMDFFWELATLIVIMLL) threads the bilayer. The Cytoplasmic portion of the chain corresponds to 218-359 (GHWIEMNAVS…EFLSDKVAKW (142 aa)). The helical transmembrane segment at 360–379 (LFYVALVVGIIAFIAWLFLA) threads the bilayer. At 380–388 (NLPDALERM) the chain is on the extracellular side. The helical transmembrane segment at 389–409 (VTVFIIACPHALGLAIPLVVA) threads the bilayer. Topologically, residues 410–703 (RSTSIAAKNG…QNLWWGAGYN (294 aa)) are cytoplasmic. Catalysis depends on Asp440, which acts as the 4-aspartylphosphate intermediate. Residues Asp638 and Asp642 each coordinate Mg(2+). The chain crosses the membrane as a helical span at residues 704-721 (IIAIPLAAGILAPIGLIL). Topologically, residues 722–723 (SP) are extracellular. A helical transmembrane segment spans residues 724-744 (AVGAVLMSLSTVVVALNALTL). Lys745 is a topological domain (cytoplasmic).

Belongs to the cation transport ATPase (P-type) (TC 3.A.3) family. Type IB subfamily. As to quaternary structure, monomer.

It is found in the cell membrane. The enzyme catalyses Cu(+)(in) + ATP + H2O = Cu(+)(out) + ADP + phosphate + H(+). Inhibited by vanadate. Involved in copper export. Can also export silver. The protein is Copper-exporting P-type ATPase B (copB) of Enterococcus hirae (strain ATCC 9790 / DSM 20160 / JCM 8729 / LMG 6399 / NBRC 3181 / NCIMB 6459 / NCDO 1258 / NCTC 12367 / WDCM 00089 / R).